A 161-amino-acid polypeptide reads, in one-letter code: uncharacterized protein (161 aa).

The segment covering 1–16 has biased composition (low complexity); sequence MPRAGRAPAEGGPAPG. Disordered stretches follow at residues 1–23, 50–91, and 140–161; these read MPRA…SRCL, GRPV…TQSA, and RGPA…WRIS.

This is an uncharacterized protein from Homo sapiens (Human).